The following is a 336-amino-acid chain: Putative ataxin-3 homolog (336 aa).

The 184-residue stretch at 10–193 (GGLLYHEVQE…KECPMATEGS (184 aa)) folds into the Josephin domain. The Nucleophile role is filled by Cys-23. His-132 functions as the Proton acceptor in the catalytic mechanism. Asn-147 is an active-site residue. Residues 244–263 (QEEADLNAAIAASLMDTGGP) form the UIM domain. Residues 281-336 (IESTSGEMSKDGNLEEQGANKSETSEPNSDNIESASGSNPKQNTTSLEGKESIKED) form a disordered region. The span at 299-327 (ANKSETSEPNSDNIESASGSNPKQNTTSL) shows a compositional bias: polar residues.

It localises to the nucleus. The enzyme catalyses Thiol-dependent hydrolysis of ester, thioester, amide, peptide and isopeptide bonds formed by the C-terminal Gly of ubiquitin (a 76-residue protein attached to proteins as an intracellular targeting signal).. Interacts with key regulators of transcription and represses transcription. Acts as a histone-binding protein that regulates transcription. Acts as a deubiquitinating enzyme. This Oryza sativa subsp. japonica (Rice) protein is Putative ataxin-3 homolog.